The following is a 476-amino-acid chain: Stromelysin-2 (476 aa).

The signal sequence occupies residues 1–17; it reads MMHLAFLVLLCLPVCSA. Residues 18–98 constitute a propeptide, activation peptide; it reads YPLSGAAKEE…PRCGVPDVGH (81 aa). The Cysteine switch signature appears at 89-96; the sequence is PRCGVPDV. 6 residues coordinate Zn(2+): C91, H167, D169, H182, H195, and H217. E218 is a catalytic residue. Positions 221 and 227 each coordinate Zn(2+). 4 Hemopexin repeats span residues 286-335, 336-382, 384-432, and 433-476; these read PAKC…WPSL, PSYL…GFPP, IRKI…FPGV, and EPKV…WLHC. An intrachain disulfide couples C289 to C476.

This sequence belongs to the peptidase M10A family. The cofactor is Zn(2+). Ca(2+) is required as a cofactor.

The protein resides in the secreted. It localises to the extracellular space. The protein localises to the extracellular matrix. It carries out the reaction Similar to stromelysin 1, but action on collagen types III, IV and V is weak.. Functionally, can degrade fibronectin, gelatins of type I, III, IV, and V; weakly collagens III, IV, and V. Activates procollagenase. This Homo sapiens (Human) protein is Stromelysin-2 (MMP10).